A 539-amino-acid chain; its full sequence is 3-methylmercaptopropionyl-CoA ligase (539 aa).

Position 185 (Thr185) interacts with Mg(2+). Residues His231, Gly303, His324, Ala325, and Ser329 each contribute to the ATP site. Mg(2+) is bound at residue Glu330. The ATP site is built by Gln359, Asp417, Arg432, and Lys523.

The protein belongs to the ATP-dependent AMP-binding enzyme family. Homodimer. Mg(2+) is required as a cofactor.

It carries out the reaction 3-(methylsulfanyl)propanoate + ATP + CoA = 3-(methylsulfanyl)propanoyl-CoA + AMP + diphosphate. The protein operates within lipid metabolism; fatty acid metabolism. Activated by LiCl and NH(4)Cl. Inhibited by dimethylsulfoniopropionate (DMSP). MMPA concentrations above 2 mM relieve the DMSP inhibition and 80% of activity is regained at an MMPA concentration of 8 mM. Its function is as follows. Involved in the assimilation of dimethylsulphoniopropionate (DMSP), an important compound in the fixation of carbon in marine phytoplankton. Catalyzes the ATP-dependent ligation of methylmercaptopropionate (MMPA) and CoA to yield methylmercaptopropionate-CoA (MMPA-CoA). It is also active with short-chain-fatty-acid (carboxylic acids up to six carbons in length). This chain is 3-methylmercaptopropionyl-CoA ligase, found in Ruegeria pomeroyi (strain ATCC 700808 / DSM 15171 / DSS-3) (Silicibacter pomeroyi).